The sequence spans 425 residues: Putative integrase/recombinase y4rF (425 aa).

The region spanning 123 to 210 is the Core-binding (CB) domain; sequence DPDALLLASF…HIRTFLRFLC (88 aa). The 186-residue stretch at 233–418 folds into the Tyr recombinase domain; the sequence is HLPPRLAWGD…AASQLAEVAL (186 aa). Residues Arg273, Lys298, His370, Arg373, and His396 contribute to the active site. The active-site O-(3'-phospho-DNA)-tyrosine intermediate is the Tyr405.

This sequence belongs to the 'phage' integrase family.

This Sinorhizobium fredii (strain NBRC 101917 / NGR234) protein is Putative integrase/recombinase y4rF.